Here is a 65-residue protein sequence, read N- to C-terminus: Gallinacin-1 (65 aa).

Positions 1 to 19 (MRIVYLLLPFILLLAQGAA) are cleaved as a signal peptide. Residues 20–25 (GSSQAL) constitute a propeptide that is removed on maturation. Cystine bridges form between Cys31–Cys59, Cys38–Cys53, and Cys43–Cys60.

It belongs to the beta-defensin family. As to expression, strong expression in the bone marrow, lung, testis. Moderate expression in the bursa and intestine. Low expression in the cloaca, gall bladder, brain and pancreas. Expressed in the vagina, ovarian stroma and the theca and granulosa layers of the ovarian follicle.

It is found in the secreted. Its subcellular location is the cytoplasmic granule. Has bactericidal activity. Potent activity against E.coli ML-35, L.monocytogenes EGD and C.albicans. The protein is Gallinacin-1 (GAL1) of Gallus gallus (Chicken).